A 202-amino-acid chain; its full sequence is Snake venom metalloproteinase TM-1 (202 aa).

Position 1 is a pyrrolidone carboxylic acid (glutamine 1). The Peptidase M12B domain occupies 7–202 (RYVMLAIVAD…TNPQCILNAP (196 aa)). 3 disulfides stabilise this stretch: cysteine 118–cysteine 197, cysteine 159–cysteine 181, and cysteine 161–cysteine 164. Residue histidine 143 coordinates Zn(2+). Glutamate 144 is a catalytic residue. Zn(2+) contacts are provided by histidine 147 and histidine 153.

It belongs to the venom metalloproteinase (M12B) family. P-I subfamily. Monomer. It depends on Zn(2+) as a cofactor. Post-translationally, the N-terminus is blocked. In terms of processing, not glycosylated. In terms of tissue distribution, expressed by the venom gland.

Its subcellular location is the secreted. Its activity is regulated as follows. Inhibited by EDTA and 1,10-phenanthroline. Is also inhibited by endogenous tripeptide inhibitors pyroGlu-Asn-Trp, pyroGlu-Gln-Trp, and pyroGlu-Lys-Trp. Functionally, potent fibrinogenolytic protease which cleaves mainly the Aalpha (FGA) and Bbeta (FGB) chains of fibrinogen and slightly the gamma chain (FGG). Shows preference for substrates having a moderate-size and hydrophobic residue at the P1' position. Preferentially cleaves Ala-|-Leu and Tyr-|-Leu bonds. Is more susceptible to tripeptide inhibitors than TM-3 (AC O57413). In Protobothrops mucrosquamatus (Taiwan habu), this protein is Snake venom metalloproteinase TM-1.